The primary structure comprises 374 residues: 2-oxoglutarate-Fe(II) type oxidoreductase ppzC (374 aa).

The tract at residues 111 to 131 (KKGPFDSGYRGPGTQRVNPDE) is disordered. Residues 220 to 330 (YPDASLEINF…RVSMPFFWGF (111 aa)) form the Fe2OG dioxygenase domain. Residues histidine 254, aspartate 256, and histidine 311 each coordinate Fe cation. A 2-oxoglutarate-binding site is contributed by arginine 321.

It belongs to the iron/ascorbate-dependent oxidoreductase family. It depends on Fe(2+) as a cofactor.

It carries out the reaction peramine + 2-oxoglutarate + O2 = 8-hydroxyperamine + succinate + CO2. It participates in secondary metabolite biosynthesis. Functionally, 2-oxoglutarate-Fe(II) type oxidoreductase; part of the gene cluster that mediates the biosynthesis of pyrrolopyrazines, secondary metabolites showing insecticidal activity. Within the pathway, ppzC uses peramine as substrate for hydroxylation to yield the novel analog 8-hydroxyperamine. The single multifunctional NRPS ppzA is sufficient to produce peramine via condensation of 1-pyrroline-5-carboxylate and arginine, N-methylation of the alpha-amino group of arginine and reduction of the thioester and the cyclization to form an iminium ion resulting in release from the peptide synthetase. Deprotonation of this intermediate and oxidation of the pyrroline ring would give rise to peramine. In Epichloe species that produce only peramine, the peramine synthetase gene is not localized in a gene cluster, in contrast to Metarhizium species that contain additional pyrrolopyrazine biosynthesis genes. The 2-oxoglutarate-Fe(II) type oxidoreductase ppzC hydroxylates peramine to yield the newly identified compound 8-hydroxyperamine whereas ppzD converts L-proline into trans-4-hydroxy-L-proline, a precursor of peramine biosynthesis. This chain is 2-oxoglutarate-Fe(II) type oxidoreductase ppzC (ppzC), found in Metarhizium majus (strain ARSEF 297).